Reading from the N-terminus, the 134-residue chain is FK506-binding protein 2 (134 aa).

Residues 1 to 19 (MRILLLSALFLSLTTLVLS) form the signal peptide. Residues 39-127 (GDTVHMHYRG…IFETELVQIE (89 aa)) form the PPIase FKBP-type domain. The Prevents secretion from ER signature appears at 131–134 (NDEL).

Belongs to the FKBP-type PPIase family. FKBP2 subfamily.

The protein resides in the endoplasmic reticulum. It catalyses the reaction [protein]-peptidylproline (omega=180) = [protein]-peptidylproline (omega=0). Inhibited by both FK506 and rapamycin. Functionally, PPIases accelerate the folding of proteins. It catalyzes the cis-trans isomerization of proline imidic peptide bonds in oligopeptides. The protein is FK506-binding protein 2 (fpr2) of Aspergillus fumigatus (strain ATCC MYA-4609 / CBS 101355 / FGSC A1100 / Af293) (Neosartorya fumigata).